The primary structure comprises 479 residues: Ribosomal RNA small subunit methyltransferase F (479 aa).

Residues 125-131 (AAAPGSK), Glu149, Asp176, and Asp194 each bind S-adenosyl-L-methionine. Cys247 serves as the catalytic Nucleophile.

This sequence belongs to the class I-like SAM-binding methyltransferase superfamily. RsmB/NOP family.

It localises to the cytoplasm. The catalysed reaction is cytidine(1407) in 16S rRNA + S-adenosyl-L-methionine = 5-methylcytidine(1407) in 16S rRNA + S-adenosyl-L-homocysteine + H(+). Functionally, specifically methylates the cytosine at position 1407 (m5C1407) of 16S rRNA. This Escherichia coli (strain K12) protein is Ribosomal RNA small subunit methyltransferase F (rsmF).